The sequence spans 483 residues: Probable apyrase 3 (483 aa).

The Cytoplasmic portion of the chain corresponds to 1 to 29; that stretch reads MTPETDALKVQILPKHQSLPYTVTKAKSK. Residues 30-50 traverse the membrane as a helical; Signal-anchor for type II membrane protein segment; the sequence is SLILLVVVSVTITLGLLLYVF. The Extracellular portion of the chain corresponds to 51–483; sequence NSNSVISSGS…NGKSRKYLGF (433 aa). 72–82 contacts ATP; sequence VLIDAGSSGTR. The active-site Proton acceptor is the Glu-195. 219 to 229 is an ATP binding site; sequence GIVELGGASAQ. N-linked (GlcNAc...) asparagine glycans are attached at residues Asn-250, Asn-281, Asn-305, and Asn-326.

The protein belongs to the GDA1/CD39 NTPase family. It depends on Ca(2+) as a cofactor. Expressed in the initiation zone of lateral root and in the lateral root tip, the adaxial junction of lateral shoots with the stems, and in the abscission zone of flower organs. Not expressed in the rosette leaves.

The protein localises to the membrane. It catalyses the reaction a ribonucleoside 5'-triphosphate + 2 H2O = a ribonucleoside 5'-phosphate + 2 phosphate + 2 H(+). Its function is as follows. Catalyzes the hydrolysis of phosphoanhydride bonds of nucleoside tri- and di-phosphates. The protein is Probable apyrase 3 (APY3) of Arabidopsis thaliana (Mouse-ear cress).